We begin with the raw amino-acid sequence, 503 residues long: Maturase K (503 aa).

It belongs to the intron maturase 2 family. MatK subfamily.

Its subcellular location is the plastid. It is found in the chloroplast. Functionally, usually encoded in the trnK tRNA gene intron. Probably assists in splicing its own and other chloroplast group II introns. This Actinodium cunninghamii (Albany daisy) protein is Maturase K.